A 350-amino-acid polypeptide reads, in one-letter code: MSNITDPQMWDFDDLNFTGMPPADEDYSPCMLETETLNKYVVIIAYALVFLLSLLGNSLVMLVILYSRVGRSVTDVYLLNLALADLLFALTLPIWAASKVNGWIFGTFLCKVVSLLKEVNFYSGILLLACISVDRYLAIVHATRTLTQKRHLVKFVCLGCWGLSMNLSLPFFLFRQAYHPNNSSPVCYEVLGNDTAKWRMVLRILPHTFGFIVPLFVMLFCYGFTLRTLFKAHMGQKHRAMRVIFAVVLIFLLCWLPYNLVLLADTLMRTQVIQESCERRNNIGRALDATEILGFLHSCLNPIIYAFIGQNFRHGFLKILAMHGLVSKEFLARHRVTSYTSSSVNVSSNL.

Over 1–39 the chain is Extracellular; the sequence is MSNITDPQMWDFDDLNFTGMPPADEDYSPCMLETETLNK. N-linked (GlcNAc...) asparagine glycans are attached at residues asparagine 3 and asparagine 16. A helical transmembrane segment spans residues 40–66; the sequence is YVVIIAYALVFLLSLLGNSLVMLVILY. Residues 67 to 75 lie on the Cytoplasmic side of the membrane; that stretch reads SRVGRSVTD. Residues 76 to 96 traverse the membrane as a helical segment; the sequence is VYLLNLALADLLFALTLPIWA. Residues 97–111 are Extracellular-facing; it reads ASKVNGWIFGTFLCK. A disulfide bond links cysteine 110 and cysteine 187. Residues 112-133 form a helical membrane-spanning segment; it reads VVSLLKEVNFYSGILLLACISV. Residues 134–154 are Cytoplasmic-facing; that stretch reads DRYLAIVHATRTLTQKRHLVK. The chain crosses the membrane as a helical span at residues 155 to 174; it reads FVCLGCWGLSMNLSLPFFLF. Over 175–199 the chain is Extracellular; it reads RQAYHPNNSSPVCYEVLGNDTAKWR. The helical transmembrane segment at 200–220 threads the bilayer; that stretch reads MVLRILPHTFGFIVPLFVMLF. The Cytoplasmic segment spans residues 221–242; that stretch reads CYGFTLRTLFKAHMGQKHRAMR. A helical transmembrane segment spans residues 243–264; that stretch reads VIFAVVLIFLLCWLPYNLVLLA. The Extracellular segment spans residues 265–285; it reads DTLMRTQVIQESCERRNNIGR. A helical membrane pass occupies residues 286 to 308; it reads ALDATEILGFLHSCLNPIIYAFI. Residues 309-350 lie on the Cytoplasmic side of the membrane; that stretch reads GQNFRHGFLKILAMHGLVSKEFLARHRVTSYTSSSVNVSSNL.

Belongs to the G-protein coupled receptor 1 family. In terms of assembly, interacts with IL8. Interacts with GNAI2.

It localises to the cell membrane. In terms of biological role, receptor to interleukin-8, which is a powerful neutrophils chemotactic factor. Binding of IL-8 to the receptor causes activation of neutrophils. This response is mediated via a G-protein that activates a phosphatidylinositol-calcium second messenger system. This Homo sapiens (Human) protein is C-X-C chemokine receptor type 1 (CXCR1).